The sequence spans 243 residues: Terpene cyclase nodB (243 aa).

Transmembrane regions (helical) follow at residues Ile-19 to Ile-39, Met-50 to Pro-70, and Ile-75 to Ile-95. A glycan (N-linked (GlcNAc...) asparagine) is linked at Asn-111. The next 4 helical transmembrane spans lie at Ile-112–Ala-132, Ile-134–Gly-154, Ser-169–Leu-189, and Leu-205–Trp-225.

The protein belongs to the paxB family.

It is found in the membrane. Its pathway is secondary metabolite biosynthesis. Terpene cyclase; part of the gene cluster that mediates the biosynthesis of the indole diterpenes nodulisporic acids (NA). Nodulisporic acid A (NAA) and its chemically modified derivatives are of particular significance because of their highly potent insecticidal activity against blood-feeding arthropods and lack of observable adverse effects on mammals, in particular the tremogenicity associated with the paspaline-derived IDTs is not observed. The geranylgeranyl diphosphate (GGPP) synthase ggs1, localized outside of the cluster, is proposed to catalyze the first step in nodulisporic acid biosynthesis via conversion of farnesyl pyrophosphate and isopentyl pyrophosphate into geranylgeranyl pyrophosphate (GGPP). Condensation of indole-3-glycerol phosphate with GGPP by the prenyl transferase nodC then forms 3-geranylgeranylindole (3-GGI). Epoxidation by the FAD-dependent monooxygenase nodM leads to a single-epoxidized-GGI that is substrate of the terpene cyclase nodB for cyclization to yield emindole SB. The terminal methyl carbon, C28, of emindole SB is then oxidized by the cytochrome P450 monooxygenase nodW to produce nodulisporic acid F (NAF), the pentacyclic core of NAA. NAF is converted to nodulisporic acid E (NAE) via prenylation. This step is probably performed by one of the indole diterpene prenyltransferases nodD1 or nodD2. Several oxidation steps performed by the FAD-linked oxidoreductase nodO and one of the cytochrome P450 monooxygenase nodR, nodX or nodZ further convert NAE to nodulisporic acid D (NAD). NAD is substrate of cytochrome P450 monooxygenase nodJ to produce the precursor of nodulisporic acid C (NAC), converted to NAC by one of the indole diterpene prenyltransferases nodD1 or nodD2. The FAD-dependent monooxygenase nodY2 then oxidizes NAC to nodulisporic acid B (NAB). Finally NAB is converted to NAA by one of the cytochrome P450 monooxygenases nodR, nodX or nodZ. The protein is Terpene cyclase nodB of Hypoxylon pulicicidum.